The following is a 1275-amino-acid chain: Rho1 guanine nucleotide exchange factor 3 (1275 aa).

Disordered stretches follow at residues 1 to 42 (MKLS…SFQK), 56 to 113 (SPPF…NSAA), 131 to 188 (NNPL…SPYS), and 214 to 248 (LSPTRSPARTPSPIRLYSSDALRPQSPLSPSVEYL). A compositionally biased stretch (basic and acidic residues) spans 7-17 (LFHRSSKDHGG). Polar residues-rich tracts occupy residues 32–42 (PHSSSPPSFQK), 80–113 (ASINSRRVASYTVQSSPSRTTYRQLPNEPQNSAA), and 142–151 (SPGNKQNTVD). Low complexity-rich tracts occupy residues 178-188 (SSVSSHSSPYS) and 214-228 (LSPTRSPARTPSPIR). Ser293 is subject to Phosphoserine. The 193-residue stretch at 465–657 (ARQNNIHELI…RATCEECDAV (193 aa)) folds into the DH domain. A PH domain is found at 692–855 (EFFFEGIVQR…WVEKINVAKK (164 aa)). The CNH domain maps to 930-1239 (YGDISCIAQF…KYYPSNSDWL (310 aa)).

Its subcellular location is the cytoplasm. Stimulates the exchange of Rho1 GDP-bound form into GTP-bound form. Regulates, via interaction and activation of Rho1, beta-1,3-glucan biosynthesis and cell wall integrity during septation. Involved in the regulation of contractile ring assembly. This is Rho1 guanine nucleotide exchange factor 3 (rgf3) from Schizosaccharomyces pombe (strain 972 / ATCC 24843) (Fission yeast).